Here is a 5088-residue protein sequence, read N- to C-terminus: Replicase polyprotein 1ab (5088 aa).

The chain crosses the membrane as a helical span at residues 26-46 (VTNVIQYWTPILTMLLLAIYI). Positions 301–323 (EIEDDTEAEETQKTKRKGKLQPQ) are disordered. A run of 5 helical transmembrane segments spans residues 343–363 (HLTF…MSPT), 1132–1152 (GLFL…AITI), 1156–1176 (TMMM…HLLL), 1201–1221 (YGCL…LAYI), and 1250–1270 (ILIP…VSYV). Active-site for 3C-like proteinase residues include histidine 1434 and cysteine 1539. Helical transmembrane passes span 1729 to 1749 (FTHT…LFFV) and 1758 to 1778 (ILSS…YGLV). The interval 3093 to 3112 (KPNCPMVPSEVPVRNKHKSA) is disordered. One can recognise an ExoN domain in the interval 4351–4616 (MNIVMDDCIC…MTQCIYQSFV (266 aa)). Catalysis depends on residues aspartate 4362, glutamate 4364, and aspartate 4481. Zn(2+)-binding residues include cysteine 4498, cysteine 4504, cysteine 4522, and histidine 4525. Residues histidine 4599, aspartate 4604, lysine 4880, aspartate 4969, lysine 4998, and glutamate 5035 contribute to the active site. A Nidovirus-type SAM-dependent 2'-O-MTase domain is found at 4844–5088 (LNNHAALAKA…RQSVFRYSPK (245 aa)).

In terms of assembly, homodimer. Post-translationally, specific enzymatic cleavages in vivo by its own protease yield mature proteins. 3CL-PRO is autocatalytically processed.

It is found in the membrane. The enzyme catalyses a 5'-end (5'-triphosphoguanosine)-ribonucleoside in mRNA + S-adenosyl-L-methionine = a 5'-end (N(7)-methyl 5'-triphosphoguanosine)-ribonucleoside in mRNA + S-adenosyl-L-homocysteine. It catalyses the reaction RNA(n) + a ribonucleoside 5'-triphosphate = RNA(n+1) + diphosphate. The catalysed reaction is ATP + H2O = ADP + phosphate + H(+). It carries out the reaction a 5'-end (N(7)-methyl 5'-triphosphoguanosine)-ribonucleoside in mRNA + S-adenosyl-L-methionine = a 5'-end (N(7)-methyl 5'-triphosphoguanosine)-(2'-O-methyl-ribonucleoside) in mRNA + S-adenosyl-L-homocysteine + H(+). In terms of biological role, cysteine protease responsible for the majority of cleavages of the polyprotein. Recognizes substrates containing the core sequence [NT]-[EHKQSY]-|-[AGNST]. The helicase which contains a zinc finger structure displays RNA and DNA duplex-unwinding activities with 5' to 3' polarity. Functionally, RNA-directed RNA polymerase that catalyzes the transcription of viral genomic and subgenomic RNAs. Its function is as follows. Catalyzes the RNA N7-guanylyltransferase reaction to methylate the core cap structure GpppN-RNA into the type-0 cap (m)GpppN-RNA. The chain is Replicase polyprotein 1ab from Ochlerotatus harrisoni (CAVV).